The chain runs to 410 residues: LL-diaminopimelate aminotransferase (410 aa).

Substrate-binding residues include Y15 and G42. Pyridoxal 5'-phosphate-binding positions include Y72, 108-109 (SK), Y132, N187, Y218, and 246-248 (SFS). The substrate site is built by K109, Y132, and N187. Residue K249 is modified to N6-(pyridoxal phosphate)lysine. Residues R257 and N292 each coordinate pyridoxal 5'-phosphate. 2 residues coordinate substrate: N292 and R388.

Belongs to the class-I pyridoxal-phosphate-dependent aminotransferase family. LL-diaminopimelate aminotransferase subfamily. Homodimer. It depends on pyridoxal 5'-phosphate as a cofactor.

The enzyme catalyses (2S,6S)-2,6-diaminopimelate + 2-oxoglutarate = (S)-2,3,4,5-tetrahydrodipicolinate + L-glutamate + H2O + H(+). Its pathway is amino-acid biosynthesis; L-lysine biosynthesis via DAP pathway; LL-2,6-diaminopimelate from (S)-tetrahydrodipicolinate (aminotransferase route): step 1/1. In terms of biological role, involved in the synthesis of meso-diaminopimelate (m-DAP or DL-DAP), required for both lysine and peptidoglycan biosynthesis. Catalyzes the direct conversion of tetrahydrodipicolinate to LL-diaminopimelate. The polypeptide is LL-diaminopimelate aminotransferase (Geotalea uraniireducens (strain Rf4) (Geobacter uraniireducens)).